A 973-amino-acid polypeptide reads, in one-letter code: Serine/threonine-protein kinase atg1 (973 aa).

In terms of domain architecture, Protein kinase spans 23–328 (YTRLDEIGRG…FPDFFQNGVI (306 aa)). Residues 29 to 37 (IGRGSFATV) and lysine 52 contribute to the ATP site. The active-site Proton acceptor is aspartate 166. Disordered regions lie at residues 338 to 446 (DDLP…PGRQ), 460 to 482 (RQKG…DKLR), 523 to 587 (GNIS…QSPT), and 949 to 973 (PTPS…TPPK). Positions 387-407 (GLTQRPPSQNQRFGTPQTTTP) are enriched in polar residues. The segment covering 523-537 (GNISRGAQTGALSRR) has biased composition (polar residues). Over residues 566 to 582 (SRADSMHNRQGSYERRY) the composition is skewed to basic and acidic residues. Residues 951 to 965 (PSANVPSKMASSNPV) are compositionally biased toward polar residues.

Belongs to the protein kinase superfamily. Ser/Thr protein kinase family. APG1/unc-51/ULK1 subfamily. In terms of assembly, homodimer. Forms a ternary complex with ATG13 and ATG17.

The protein resides in the cytoplasm. Its subcellular location is the preautophagosomal structure membrane. It carries out the reaction L-seryl-[protein] + ATP = O-phospho-L-seryl-[protein] + ADP + H(+). The enzyme catalyses L-threonyl-[protein] + ATP = O-phospho-L-threonyl-[protein] + ADP + H(+). Serine/threonine protein kinase involved in the cytoplasm to vacuole transport (Cvt) and found to be essential in autophagy, where it is required for the formation of autophagosomes. Involved in the clearance of protein aggregates which cannot be efficiently cleared by the proteasome. Required for selective autophagic degradation of the nucleus (nucleophagy) as well as for mitophagy which contributes to regulate mitochondrial quantity and quality by eliminating the mitochondria to a basal level to fulfill cellular energy requirements and preventing excess ROS production. Also involved in endoplasmic reticulum-specific autophagic process, in selective removal of ER-associated degradation (ERAD) substrates. Plays a key role in ATG9 and ATG23 cycling through the pre-autophagosomal structure and is necessary to promote ATG18 binding to ATG9 through phosphorylation of ATG9. Catalyzes phosphorylation of ATG4, decreasing the interaction between ATG4 and ATG8 and impairing deconjugation of PE-conjugated forms of ATG8. The protein is Serine/threonine-protein kinase atg1 of Aspergillus fumigatus (strain ATCC MYA-4609 / CBS 101355 / FGSC A1100 / Af293) (Neosartorya fumigata).